A 235-amino-acid chain; its full sequence is Phosphoglycolate phosphatase (235 aa).

The Nucleophile role is filled by Asp14. Residues Asp14, Asp16, and Asp177 each coordinate Mg(2+).

It belongs to the HAD-like hydrolase superfamily. CbbY/CbbZ/Gph/YieH family. Mg(2+) is required as a cofactor.

The catalysed reaction is 2-phosphoglycolate + H2O = glycolate + phosphate. It participates in organic acid metabolism; glycolate biosynthesis; glycolate from 2-phosphoglycolate: step 1/1. Its function is as follows. Specifically catalyzes the dephosphorylation of 2-phosphoglycolate. Is involved in the dissimilation of the intracellular 2-phosphoglycolate formed during the DNA repair of 3'-phosphoglycolate ends, a major class of DNA lesions induced by oxidative stress. This is Phosphoglycolate phosphatase from Neisseria meningitidis serogroup A / serotype 4A (strain DSM 15465 / Z2491).